We begin with the raw amino-acid sequence, 1288 residues long: Probable serine/threonine-protein kinase drkD (1288 aa).

Positions 1–12 are enriched in polar residues; it reads MEGSFQFNKSKQ. Disordered stretches follow at residues 1–132, 156–223, and 269–386; these read MEGS…QYHP, FNVS…PEEI, and SFGH…DDEE. Composition is skewed to low complexity over residues 13–79 and 156–220; these read TNNN…NSTS and FNVS…QQQP. Residues 221-248 adopt a coiled-coil conformation; sequence EEIEGELNRERQERDKMLHEEAEIEQYK. Residues 271-291 show a composition bias toward polar residues; it reads GHITSANSDETTNNESGSPIN. Over residues 302-343 the composition is skewed to basic and acidic residues; the sequence is PHSSHNEDHQSDQDNHGQFMNDEHQSTDDDQNKSDNEKESES. Positions 344–354 are enriched in polar residues; that stretch reads ARNSGDLQQKV. The segment covering 376 to 386 has biased composition (acidic residues); it reads EGEEEDDDDEE. LRR repeat units lie at residues 400-421, 423-444, 446-468, 469-490, 492-513, 517-538, and 540-561; these read KSTKLSLSNCWLKVIPTDVWSI, ELRDLDLSANQLKKVSKSIGLL, HLKRLRLNHNQLTALPKELYSLP, RLTTLYLNNNNFKVVPKEINRL, SLKTLDLSFNQITDISPQTNLH, NLVELRLRYNQLSSLPQNMLES, and HLQVLWLEGNRLPLNKAILKKS. Disordered regions lie at residues 690-717, 733-764, and 796-825; these read WDQQQQQQQQQSPNVSTPPISTSPVLTG, PTQQINNPPSPVTQFNQASPQHNNNQQQQQQQ, and QQQQQQNGSPQQPHVNNNNNNNIQQNKDHQ. 2 stretches are compositionally biased toward polar residues: residues 701–717 and 733–757; these read SPNVSTPPISTSPVLTG and PTQQINNPPSPVTQFNQASPQHNNN. In terms of domain architecture, Protein kinase spans 851–1104; it reads IAIGARIGRG…EILPIMEGMI (254 aa). ATP contacts are provided by residues 857–865 and Lys-878; that span reads IGRGGYGQV. Asp-974 functions as the Proton acceptor in the catalytic mechanism. 2 disordered regions span residues 1118–1141 and 1245–1288; these read GRPIPYVGPPEKDPSNKQPPQNMA and QQQL…NDKK. The span at 1257–1268 shows a compositional bias: low complexity; it reads NRLNYNFNNSNN. Over residues 1269–1282 the composition is skewed to polar residues; the sequence is SDIQPMQQENNYRM.

This sequence belongs to the protein kinase superfamily. TKL Ser/Thr protein kinase family.

The catalysed reaction is L-seryl-[protein] + ATP = O-phospho-L-seryl-[protein] + ADP + H(+). It carries out the reaction L-threonyl-[protein] + ATP = O-phospho-L-threonyl-[protein] + ADP + H(+). In Dictyostelium discoideum (Social amoeba), this protein is Probable serine/threonine-protein kinase drkD (drkD).